An 81-amino-acid polypeptide reads, in one-letter code: High-potential iron-sulfur protein (81 aa).

[4Fe-4S] cluster contacts are provided by Cys43, Cys46, Cys59, and Cys73.

It belongs to the high-potential iron-sulfur protein (HiPIP) family. Homodimer.

It is found in the periplasm. Functionally, specific class of high-redox-potential 4Fe-4S ferredoxins. Functions in anaerobic electron transport in most purple and in some other photosynthetic bacteria and in at least one genus (Paracoccus) of halophilic, denitrifying bacteria. This chain is High-potential iron-sulfur protein, found in Halochromatium salexigens (Chromatium salexigens).